A 275-amino-acid chain; its full sequence is Gamma carbonic anhydrase 1, mitochondrial (275 aa).

The N-terminal 43 residues, 1-43 (MGTLGRAFYSVGFWIRETGQALDRLGCRLQGKNYFREQLSRHR), are a transit peptide targeting the mitochondrion. Substrate contacts are provided by residues 86-88 (RGD) and 101-102 (QD). 3 residues coordinate Zn(2+): H107, H130, and H135. Residue N209 coordinates substrate. The tract at residues 256–275 (LNLPNNILPDKETKRPSNVN) is disordered. A compositionally biased stretch (basic and acidic residues) spans 264–275 (PDKETKRPSNVN).

It belongs to the gamma-class carbonic anhydrase family. In terms of assembly, homotrimer. Component of the mitochondrial oxidoreductase respiratory chain complex I; element of the extra matrix-exposed domain, which is attached to the membrane arm of this complex. The cofactor is Zn(2+).

The protein localises to the mitochondrion membrane. Its function is as follows. Enzyme involved in the catabolism of H(2)CO(3) but that does not mediates the reversible hydration of carbon dioxide. Mediates complex I assembly in mitochondria and respiration. The chain is Gamma carbonic anhydrase 1, mitochondrial (GAMMACA1) from Arabidopsis thaliana (Mouse-ear cress).